We begin with the raw amino-acid sequence, 213 residues long: Citrate synthase, mitochondrial (213 aa).

H74 is an active-site residue. N6-acetyllysine; alternate is present on residues K94 and K100. 2 positions are modified to N6-succinyllysine; alternate: K94 and K100. H120 is an active-site residue. R129 is a binding site for oxaloacetate. K148 is subject to N6-acetyllysine; alternate. Position 148 is an N6-succinyllysine; alternate (K148). K155 is modified (N6-acetyllysine). K166 is subject to N6-acetyllysine; alternate. K166 carries the N6-succinyllysine; alternate modification. K168 carries the post-translational modification N6,N6,N6-trimethyllysine. D175 is a catalytic residue. Residue R201 participates in oxaloacetate binding.

This sequence belongs to the citrate synthase family. Homodimer. In terms of processing, in response to mitochondrial stress, the precursor protein is ubiquitinated by the SIFI complex in the cytoplasm before mitochondrial import, leading to its degradation. Within the SIFI complex, UBR4 initiates ubiquitin chain that are further elongated or branched by KCMF1.

It is found in the mitochondrion matrix. The catalysed reaction is oxaloacetate + acetyl-CoA + H2O = citrate + CoA + H(+). Its pathway is carbohydrate metabolism; tricarboxylic acid cycle; isocitrate from oxaloacetate: step 1/2. In terms of biological role, key enzyme of the Krebs tricarboxylic acid cycle which catalyzes the synthesis of citrate from acetyl coenzyme A and oxaloacetate. This is Citrate synthase, mitochondrial from Mesocricetus auratus (Golden hamster).